We begin with the raw amino-acid sequence, 393 residues long: NAD(P)H-quinone oxidoreductase subunit H, chloroplastic (393 aa).

Belongs to the complex I 49 kDa subunit family. NDH is composed of at least 16 different subunits, 5 of which are encoded in the nucleus.

The protein resides in the plastid. It is found in the chloroplast thylakoid membrane. The catalysed reaction is a plastoquinone + NADH + (n+1) H(+)(in) = a plastoquinol + NAD(+) + n H(+)(out). The enzyme catalyses a plastoquinone + NADPH + (n+1) H(+)(in) = a plastoquinol + NADP(+) + n H(+)(out). Its function is as follows. NDH shuttles electrons from NAD(P)H:plastoquinone, via FMN and iron-sulfur (Fe-S) centers, to quinones in the photosynthetic chain and possibly in a chloroplast respiratory chain. The immediate electron acceptor for the enzyme in this species is believed to be plastoquinone. Couples the redox reaction to proton translocation, and thus conserves the redox energy in a proton gradient. In Panax ginseng (Korean ginseng), this protein is NAD(P)H-quinone oxidoreductase subunit H, chloroplastic.